Consider the following 323-residue polypeptide: GDP-mannose 4,6-dehydratase (323 aa).

NADP(+) is bound by residues Thr11–Asp14, Arg36, Asp59–Met60, and Leu81–Ser85. The active site involves Thr126. Catalysis depends on nucleophile residues Glu128 and Tyr150. The NADP(+) site is built by Lys154, His180, and Arg185.

It belongs to the NAD(P)-dependent epimerase/dehydratase family. GDP-mannose 4,6-dehydratase subfamily. Homotetramer. NADP(+) is required as a cofactor.

It catalyses the reaction GDP-alpha-D-mannose = GDP-4-dehydro-alpha-D-rhamnose + H2O. It participates in bacterial outer membrane biogenesis; lipopolysaccharide biosynthesis. Catalyzes the conversion of GDP-D-mannose to GDP-4-dehydro-6-deoxy-D-mannose. The protein is GDP-mannose 4,6-dehydratase of Pseudomonas aeruginosa (strain ATCC 15692 / DSM 22644 / CIP 104116 / JCM 14847 / LMG 12228 / 1C / PRS 101 / PAO1).